The sequence spans 469 residues: Glutamine synthetase (469 aa).

The region spanning 14 to 98 (NDVKYVDLRF…ITCDVLEPTT (85 aa)) is the GS beta-grasp domain. One can recognise a GS catalytic domain in the interval 106 to 469 (PRGIAKKAEA…PVEFDMYYSG (364 aa)). Mg(2+) is bound by residues glutamate 131 and glutamate 133. Glutamate 209 is an ATP binding site. 2 residues coordinate Mg(2+): glutamate 214 and glutamate 221. Residues 265–266 (NG) and glycine 266 each bind L-glutamate. Residue histidine 270 coordinates Mg(2+). ATP contacts are provided by residues 272-274 (HQS) and serine 274. Arginine 322, glutamate 328, and arginine 340 together coordinate L-glutamate. ATP is bound by residues arginine 340, arginine 345, and lysine 353. Glutamate 358 is a binding site for Mg(2+). Arginine 360 is an L-glutamate binding site. Residue tyrosine 398 is modified to O-AMP-tyrosine.

The protein belongs to the glutamine synthetase family. In terms of assembly, oligomer of 12 subunits arranged in the form of two hexameric ring. The cofactor is Mg(2+).

Its subcellular location is the cytoplasm. The catalysed reaction is L-glutamate + NH4(+) + ATP = L-glutamine + ADP + phosphate + H(+). Its activity is regulated as follows. The activity of this enzyme could be controlled by adenylation under conditions of abundant glutamine. Catalyzes the ATP-dependent biosynthesis of glutamine from glutamate and ammonia. This chain is Glutamine synthetase, found in Bradyrhizobium diazoefficiens (strain JCM 10833 / BCRC 13528 / IAM 13628 / NBRC 14792 / USDA 110).